The sequence spans 272 residues: Shikimate dehydrogenase (NADP(+)) (272 aa).

Shikimate contacts are provided by residues 14–16 (SKS) and T61. The Proton acceptor role is filled by K65. E77 provides a ligand contact to NADP(+). N86 and D102 together coordinate shikimate. NADP(+) contacts are provided by residues 126 to 130 (GAGGA), 149 to 154 (NRTASR), and M213. Position 215 (Y215) interacts with shikimate. G237 is a binding site for NADP(+).

It belongs to the shikimate dehydrogenase family. As to quaternary structure, homodimer.

The catalysed reaction is shikimate + NADP(+) = 3-dehydroshikimate + NADPH + H(+). The protein operates within metabolic intermediate biosynthesis; chorismate biosynthesis; chorismate from D-erythrose 4-phosphate and phosphoenolpyruvate: step 4/7. Involved in the biosynthesis of the chorismate, which leads to the biosynthesis of aromatic amino acids. Catalyzes the reversible NADPH linked reduction of 3-dehydroshikimate (DHSA) to yield shikimate (SA). The protein is Shikimate dehydrogenase (NADP(+)) of Citrobacter koseri (strain ATCC BAA-895 / CDC 4225-83 / SGSC4696).